The sequence spans 31 residues: Photosystem II reaction center protein M (31 aa).

Residues 5 to 25 form a helical membrane-spanning segment; that stretch reads ILALMATALFIIIPTAFLIIL.

It belongs to the PsbM family. In terms of assembly, PSII is composed of 1 copy each of membrane proteins PsbA, PsbB, PsbC, PsbD, PsbE, PsbF, PsbH, PsbI, PsbJ, PsbK, PsbL, PsbM, PsbT, PsbX, PsbY, PsbZ, Psb30/Ycf12, at least 3 peripheral proteins of the oxygen-evolving complex and a large number of cofactors. It forms dimeric complexes.

The protein resides in the plastid. It localises to the chloroplast thylakoid membrane. Its function is as follows. One of the components of the core complex of photosystem II (PSII). PSII is a light-driven water:plastoquinone oxidoreductase that uses light energy to abstract electrons from H(2)O, generating O(2) and a proton gradient subsequently used for ATP formation. It consists of a core antenna complex that captures photons, and an electron transfer chain that converts photonic excitation into a charge separation. This subunit is found at the monomer-monomer interface. This Mesostigma viride (Green alga) protein is Photosystem II reaction center protein M.